The primary structure comprises 202 residues: 3-isopropylmalate dehydratase small subunit (202 aa).

The protein belongs to the LeuD family. LeuD type 1 subfamily. Heterodimer of LeuC and LeuD.

It carries out the reaction (2R,3S)-3-isopropylmalate = (2S)-2-isopropylmalate. Its pathway is amino-acid biosynthesis; L-leucine biosynthesis; L-leucine from 3-methyl-2-oxobutanoate: step 2/4. Catalyzes the isomerization between 2-isopropylmalate and 3-isopropylmalate, via the formation of 2-isopropylmaleate. The protein is 3-isopropylmalate dehydratase small subunit of Nocardia farcinica (strain IFM 10152).